A 633-amino-acid polypeptide reads, in one-letter code: MPTTFHEIPRKRPTTPLLDRAQTPDGLRRLGEAELETLADELRLELLYTVGQTGGHFGAGLGVIELTIALHYVFDTPDDRLVWDVGHQAYPHKILTGRREQMASLRQKDGLAAFPRRSESEYDTFGVGHSSTSISAALGMAIAARLQNSERKAIAVIGDGALTAGMAFEALNHAPEVDANMLVILNDNDMSISRNVGGLSNYLAKILSSRTYASMREGSKKVLSRLPGAWEIARRTEEYAKGMLVPGTLFEELGWNYIGPIDGHDLPTLIATLRNMRDLKGPQFLHVVTKKGKGFAPAEVDPIGYHAITKLEPLDAPAAAPKKAGGPKYSGVFGEWLCDMAAADPRLVGITPAMKEGSDLVAFSERFPLRYFDVAIAEQHAVTLAAGMACEGAKPVVAIYSTFLQRGYDQLIHDVAVQNLDVLFAIDRAGLVGEDGPTHAGSFDLSYLRCIPGMLVMTPSDENELRMMLSTGHLYNGPAAVRYPRGTGPNAPIDKSLEPIEIGKGVIRRQGRQVALLVFGVQLAEALQVAEKLDATVVDMRFVKPLDEALVREIASSHELLVTIEENAIMGGAGGAVSEYLARENILKPILHLGLPDAYVEHAKPAQMLAECGLDEAGIEASVRQRLALLGLA.

The interval 1 to 22 (MPTTFHEIPRKRPTTPLLDRAQ) is disordered. Thiamine diphosphate is bound by residues H87 and 128–130 (GHS). A Mg(2+)-binding site is contributed by D159. Residues 160–161 (GA), N188, F295, and E378 each bind thiamine diphosphate. Mg(2+) is bound at residue N188.

The protein belongs to the transketolase family. DXPS subfamily. In terms of assembly, homodimer. It depends on Mg(2+) as a cofactor. The cofactor is thiamine diphosphate.

It catalyses the reaction D-glyceraldehyde 3-phosphate + pyruvate + H(+) = 1-deoxy-D-xylulose 5-phosphate + CO2. It participates in metabolic intermediate biosynthesis; 1-deoxy-D-xylulose 5-phosphate biosynthesis; 1-deoxy-D-xylulose 5-phosphate from D-glyceraldehyde 3-phosphate and pyruvate: step 1/1. Its function is as follows. Catalyzes the acyloin condensation reaction between C atoms 2 and 3 of pyruvate and glyceraldehyde 3-phosphate to yield 1-deoxy-D-xylulose-5-phosphate (DXP). The sequence is that of 1-deoxy-D-xylulose-5-phosphate synthase from Pseudomonas fluorescens (strain ATCC BAA-477 / NRRL B-23932 / Pf-5).